We begin with the raw amino-acid sequence, 688 residues long: DNA ligase (688 aa).

NAD(+) contacts are provided by residues 42–46, 91–92, and glutamate 128; these read DAEYD and SL. Lysine 130 (N6-AMP-lysine intermediate) is an active-site residue. The NAD(+) site is built by arginine 151, glutamate 188, lysine 305, and lysine 329. 4 residues coordinate Zn(2+): cysteine 423, cysteine 426, cysteine 441, and cysteine 447. Residues 608 to 688 form the BRCT domain; that stretch reads APQGVLAGKT…GMRKLLEGQL (81 aa).

Belongs to the NAD-dependent DNA ligase family. LigA subfamily. Mg(2+) serves as cofactor. Requires Mn(2+) as cofactor.

It catalyses the reaction NAD(+) + (deoxyribonucleotide)n-3'-hydroxyl + 5'-phospho-(deoxyribonucleotide)m = (deoxyribonucleotide)n+m + AMP + beta-nicotinamide D-nucleotide.. In terms of biological role, DNA ligase that catalyzes the formation of phosphodiester linkages between 5'-phosphoryl and 3'-hydroxyl groups in double-stranded DNA using NAD as a coenzyme and as the energy source for the reaction. It is essential for DNA replication and repair of damaged DNA. The protein is DNA ligase of Paraburkholderia xenovorans (strain LB400).